A 469-amino-acid chain; its full sequence is Zinc finger and BTB domain-containing protein 8A.1-B (469 aa).

Residues 24 to 92 (CDCHIIVEGQ…VYSGKLPLSG (69 aa)) form the BTB domain. 2 consecutive C2H2-type zinc fingers follow at residues 315-337 (FKCP…LRCH) and 343-366 (YPCE…QTIH).

Its subcellular location is the nucleus. Functionally, may be involved in transcriptional regulation. This is Zinc finger and BTB domain-containing protein 8A.1-B (zbtb8a.1-b) from Xenopus laevis (African clawed frog).